Consider the following 437-residue polypeptide: Transmembrane protein with metallophosphoesterase domain (437 aa).

The next 5 helical transmembrane spans lie at 7 to 27 (LSAE…MLIS), 41 to 61 (ALLF…LGSL), 87 to 107 (IIVL…FFLV), 116 to 136 (LLSF…FVFG), and 164 to 184 (VLAL…AAQP). Residues Asp-211, His-213, Asp-243, Asn-274, His-376, and His-378 each coordinate a divalent metal cation.

Belongs to the metallophosphoesterase superfamily. LOC643853 family. The cofactor is a divalent metal cation.

It is found in the membrane. The chain is Transmembrane protein with metallophosphoesterase domain (tmppe) from Danio rerio (Zebrafish).